Consider the following 340-residue polypeptide: Fructose import permease protein FruG (340 aa).

9 consecutive transmembrane segments (helical) span residues 23–43, 49–69, 73–93, 101–121, 130–150, 182–202, 234–254, 273–293, and 307–327; these read IPTL…QALF, LGFI…AVAM, ILTG…AVVG, VPAF…GLLA, MQPF…ASII, LSFN…YVFL, IIYL…TANI, VVIG…SVLG, and FGVP…VFVV.

This sequence belongs to the binding-protein-dependent transport system permease family. In terms of assembly, the complex is composed of an ATP-binding protein (FruK), two transmembrane proteins (FruF and FruG) and a solute-binding protein (FruE).

The protein resides in the cell membrane. In terms of biological role, part of the high-affinity ABC transporter complex FruEKFG involved in fructose uptake. Can also transport ribose and xylose, with lower affinity. Probably responsible for the translocation of the substrate across the membrane. This is Fructose import permease protein FruG from Bifidobacterium longum (strain NCC 2705).